We begin with the raw amino-acid sequence, 359 residues long: Phospho-N-acetylmuramoyl-pentapeptide-transferase (359 aa).

The next 10 membrane-spanning stretches (helical) occupy residues Gln3–Ile23, Val55–Leu75, Gly84–Ile104, Thr120–Ala140, Ile156–Ala176, Leu187–Phe207, Leu231–Ala251, Ile255–Thr275, Ile280–Ile300, and Phe334–Leu354.

This sequence belongs to the glycosyltransferase 4 family. MraY subfamily. Requires Mg(2+) as cofactor.

The protein localises to the cell membrane. It carries out the reaction UDP-N-acetyl-alpha-D-muramoyl-L-alanyl-gamma-D-glutamyl-meso-2,6-diaminopimeloyl-D-alanyl-D-alanine + di-trans,octa-cis-undecaprenyl phosphate = di-trans,octa-cis-undecaprenyl diphospho-N-acetyl-alpha-D-muramoyl-L-alanyl-D-glutamyl-meso-2,6-diaminopimeloyl-D-alanyl-D-alanine + UMP. It participates in cell wall biogenesis; peptidoglycan biosynthesis. Catalyzes the initial step of the lipid cycle reactions in the biosynthesis of the cell wall peptidoglycan: transfers peptidoglycan precursor phospho-MurNAc-pentapeptide from UDP-MurNAc-pentapeptide onto the lipid carrier undecaprenyl phosphate, yielding undecaprenyl-pyrophosphoryl-MurNAc-pentapeptide, known as lipid I. The polypeptide is Phospho-N-acetylmuramoyl-pentapeptide-transferase (Mycobacterium sp. (strain JLS)).